The following is a 151-amino-acid chain: Extracellular globin-4 (151 aa).

The 146-residue stretch at cysteine 6–proline 151 folds into the Globin domain. A disulfide bond links cysteine 7 and cysteine 138. Histidine 101 is a heme b binding site.

This sequence belongs to the globin family. In terms of assembly, the extracellular hemoglobin of the earthworm consists of 12 subunits that have a hexagonal bilayer structure with a molecular weight near 3.8 million. Each one-twelfth subunit is composed primarily of disulfide linked trimers (chains A, B, and C) and monomers (chain D).

The protein resides in the secreted. This chain is Extracellular globin-4, found in Lumbricus terrestris (Common earthworm).